We begin with the raw amino-acid sequence, 207 residues long: Protein MK0488 (207 aa).

The 193-residue stretch at 8 to 200 folds into the AMMECR1 domain; sequence EEGEFLVRLA…EEEPEGPVRE (193 aa).

The sequence is that of Protein MK0488 from Methanopyrus kandleri (strain AV19 / DSM 6324 / JCM 9639 / NBRC 100938).